Reading from the N-terminus, the 339-residue chain is Phosphate acyltransferase (339 aa).

It belongs to the PlsX family. Homodimer. Probably interacts with PlsY.

It localises to the cytoplasm. It catalyses the reaction a fatty acyl-[ACP] + phosphate = an acyl phosphate + holo-[ACP]. It participates in lipid metabolism; phospholipid metabolism. In terms of biological role, catalyzes the reversible formation of acyl-phosphate (acyl-PO(4)) from acyl-[acyl-carrier-protein] (acyl-ACP). This enzyme utilizes acyl-ACP as fatty acyl donor, but not acyl-CoA. The chain is Phosphate acyltransferase from Brachyspira hyodysenteriae (strain ATCC 49526 / WA1).